A 203-amino-acid chain; its full sequence is Small ribosomal subunit protein uS4c (203 aa).

The disordered stretch occupies residues leucine 15–serine 42. Positions methionine 89–asparagine 150 constitute an S4 RNA-binding domain.

This sequence belongs to the universal ribosomal protein uS4 family. Part of the 30S ribosomal subunit. Contacts protein S5. The interaction surface between S4 and S5 is involved in control of translational fidelity.

Its subcellular location is the plastid. The protein resides in the chloroplast. Its function is as follows. One of the primary rRNA binding proteins, it binds directly to 16S rRNA where it nucleates assembly of the body of the 30S subunit. In terms of biological role, with S5 and S12 plays an important role in translational accuracy. This chain is Small ribosomal subunit protein uS4c (rps4), found in Oenothera elata subsp. hookeri (Hooker's evening primrose).